The primary structure comprises 980 residues: Chitin binding domain containing chtb-2 (980 aa).

A signal peptide spans 1–20 (MRTMHCFLFILLFCLGQVFT). Residues Asn187 and Asn190 are each glycosylated (N-linked (GlcNAc...) asparagine). Disordered regions lie at residues 310–354 (ERQQ…AELD), 431–451 (QEEERQRKIQQQKVEMEQIRQ), and 486–512 (EILRQQEEDQKKKKLEKDREQREQQEA). N-linked (GlcNAc...) asparagine glycans are attached at residues Asn941 and Asn975.

The sequence is that of Chitin binding domain containing chtb-2 from Caenorhabditis elegans.